The sequence spans 813 residues: DNA ligase (813 aa).

NAD(+)-binding positions include 41–45, 90–91, and Glu-127; these read DAEYD and SI. Lys-129 (N6-AMP-lysine intermediate) is an active-site residue. NAD(+) is bound by residues Arg-150, Glu-189, Lys-307, and Lys-331. 4 residues coordinate Zn(2+): Cys-440, Cys-443, Cys-458, and Cys-464. Residues 729–813 form the BRCT domain; sequence AEEGALSGKT…LLQNPPGDSA (85 aa).

The protein belongs to the NAD-dependent DNA ligase family. LigA subfamily. Requires Mg(2+) as cofactor. Mn(2+) is required as a cofactor.

It catalyses the reaction NAD(+) + (deoxyribonucleotide)n-3'-hydroxyl + 5'-phospho-(deoxyribonucleotide)m = (deoxyribonucleotide)n+m + AMP + beta-nicotinamide D-nucleotide.. In terms of biological role, DNA ligase that catalyzes the formation of phosphodiester linkages between 5'-phosphoryl and 3'-hydroxyl groups in double-stranded DNA using NAD as a coenzyme and as the energy source for the reaction. It is essential for DNA replication and repair of damaged DNA. The chain is DNA ligase from Ralstonia nicotianae (strain ATCC BAA-1114 / GMI1000) (Ralstonia solanacearum).